A 1317-amino-acid polypeptide reads, in one-letter code: Nucleoporin NUP145 (1317 aa).

The span at 1 to 16 (MFNKSVNSGFTFGNQN) shows a compositional bias: polar residues. The interval 1-36 (MFNKSVNSGFTFGNQNTSTPTSTPAQPSSSLQFPQK) is disordered. One copy of the FG 1 repeat lies at 12 to 13 (FG). Residues 17 to 30 (TSTPTSTPAQPSSS) are compositionally biased toward low complexity. Residues 39-42 (GLFG) form a GLFG 1 repeat. An FG 2 repeat occupies 79–80 (FG). The GLFG 2 repeat unit spans residues 89 to 92 (GLFG). One copy of the FG 3 repeat lies at 106–107 (FG). The interval 133 to 165 (QNGGLFGNSNNNNITSTTQNGGLFGKPTTTPAG) is disordered. GLFG repeat units lie at residues 136–139 (GLFG), 154–157 (GLFG), 168–171 (GLFG), and 181–184 (GLFG). Low complexity predominate over residues 139-164 (GNSNNNNITSTTQNGGLFGKPTTTPA). The stretch at 193–196 (GIFG) is one GLFG 7; approximate repeat. One copy of the GLFG 8 repeat lies at 206 to 209 (GLFG). Positions 249–278 (TSSLSDVNGKSDAEPKPIENRRTYSFSSSV) are disordered. Residues 257 to 270 (GKSDAEPKPIENRR) show a composition bias toward basic and acidic residues. S273 is modified (phosphoserine). A Bipartite nuclear localization signal motif is present at residues 369 to 385 (RKLKIDSNRSAAKKLKL). The segment at 390-450 (PAITKKHMQD…NLNKQDGENT (61 aa)) is disordered. A required for autocatalytic cleavage region spans residues 398 to 523 (QDEQDSSENE…FGKIVIFRSS (126 aa)). A phosphoserine mark is found at S403, S404, and S414. Residues 418 to 427 (IDRKENRDNN) show a composition bias toward basic and acidic residues. Positions 428-444 (LDNTYLNGKEQSNNLNK) are enriched in polar residues. In terms of domain architecture, Peptidase S59 spans 458–605 (SFGYWCSPSP…GTWTFKVNHF (148 aa)). The interval 460–604 (GYWCSPSPEQ…GGTWTFKVNH (145 aa)) is nucleoporin RNA-binding motif (NRM). S667, S679, and S689 each carry phosphoserine. T751 is subject to Phosphothreonine.

This sequence belongs to the nucleoporin GLFG family. As to quaternary structure, component of the nuclear pore complex (NPC). NPC constitutes the exclusive means of nucleocytoplasmic transport. NPCs allow the passive diffusion of ions and small molecules and the active, nuclear transport receptor-mediated bidirectional transport of macromolecules such as proteins, RNAs, ribonucleoparticles (RNPs), and ribosomal subunits across the nuclear envelope. Due to its 8-fold rotational symmetry, all subunits are present with 8 copies or multiples thereof. NUP145C is part of the heptameric 0.5 MDa autoassembling NUP84 NPC subcomplex (NUP84, NUP85, NUP120, NUP133, NUP145C, SEC13 and SEH1). NUP145N may bind homomeric RNA and interacts through its FG repeats with karyopherins. Interacts with MLP1 and MLP2. NUP145 is autocatalytically cleaved in NUP145N and NUP145C.

The protein resides in the nucleus. It is found in the nuclear pore complex. The protein localises to the nucleus membrane. Functions as a component of the nuclear pore complex (NPC). NPC components, collectively referred to as nucleoporins (NUPs), can play the role of both NPC structural components and of docking or interaction partners for transiently associated nuclear transport factors. Active directional transport is assured by both, a Phe-Gly (FG) repeat affinity gradient for these transport factors across the NPC and a transport cofactor concentration gradient across the nuclear envelope (GSP1 and GSP2 GTPases associated predominantly with GTP in the nucleus, with GDP in the cytoplasm). NUP145 is autocatalytically cleaved in vivo in 2 polypeptides which assume different functions in the NPC. NUP145N as one of the FG repeat nucleoporins participates in karyopherin interactions and contains part of the autocatalytic cleavage activity. NUP145C as part of the NUP84 complex is involved in nuclear poly(A)+ RNA and tRNA export. It is also required for normal NPC distribution (probably through interactions with MLP1 and MLP2) and NPC assembly, as well as for normal nuclear envelope organization. This Saccharomyces cerevisiae (strain ATCC 204508 / S288c) (Baker's yeast) protein is Nucleoporin NUP145 (NUP145).